Consider the following 861-residue polypeptide: Conserved oligomeric Golgi complex subunit 4 (861 aa).

Belongs to the COG4 family. Component of the conserved oligomeric Golgi (COG or Sec34/Sec35) complex which consists of eight different proteins COG1-COG8.

Its subcellular location is the golgi apparatus membrane. In terms of biological role, acts as essential component of the peripheral membrane COG complex that is involved in intra-Golgi protein trafficking. COG is located at the cis-Golgi, and regulates tethering of retrograde intra-Golgi vesicles and possibly a number of other membrane trafficking events. Possesses ATPase activity. In Saccharomyces cerevisiae (strain ATCC 204508 / S288c) (Baker's yeast), this protein is Conserved oligomeric Golgi complex subunit 4 (COG4).